Here is a 218-residue protein sequence, read N- to C-terminus: MPMILGYWDIRGLAHAIRLLLEYTDTNYEERQYSVGDAPDYDRSQWLNEKFKLGLDFPNLPYLIDGTHKLTQSNAILRYIARKHNLCGETEEEMIRVDILENQVMDVRLAMARICYSPDFEKLKPGFLKEIPEKIKLFSEFLGKRPWFAGDKLTYVDFLVYDVLDMHRIFEPKCLDAFPNLKDFISRFEGLKKISAYMKSSRFLPGPLFMKLAVWGNK.

The GST N-terminal domain occupies 2 to 88; the sequence is PMILGYWDIR…YIARKHNLCG (87 aa). Residues 7 to 8, 43 to 46, K50, 59 to 60, and 72 to 73 each bind glutathione; these read YW, RSQW, NL, and QS. Residues 90–208 form the GST C-terminal domain; the sequence is TEEEMIRVDI…KSSRFLPGPL (119 aa). Position 116 (Y116) interacts with substrate.

The protein belongs to the GST superfamily. Mu family. In terms of assembly, homodimer.

The protein localises to the cytoplasm. It catalyses the reaction RX + glutathione = an S-substituted glutathione + a halide anion + H(+). It carries out the reaction prostaglandin A2 + glutathione = prostaglandin A2-S-(R)-glutathione. The catalysed reaction is prostaglandin J2 + glutathione = prostaglandin J2-S-(R)-glutathione. The enzyme catalyses prostaglandin J2 + glutathione = prostaglandin J2-S-(S)-glutathione. It catalyses the reaction prostaglandin A2 + glutathione = prostaglandin A2-S-(S)-glutathione. It carries out the reaction 11(S)-hydroxy-14(S),15(S)-epoxy-(5Z,8Z,12E)-eicosatrienoate + glutathione = (11S,15S)-dihydroxy-14(R)-S-glutathionyl-(5Z,8Z,12E)-eicosatrienoate. Conjugation of reduced glutathione to a wide number of exogenous and endogenous hydrophobic electrophiles. Protects against the thiol-mediated metal-catalyzed oxidative inactivation of enzymes. Involved in the formation of glutathione conjugates of both prostaglandin A2 (PGA2) and prostaglandin J2 (PGJ2). Participates in the formation of novel hepoxilin regioisomers. In Bos taurus (Bovine), this protein is Glutathione S-transferase Mu 1 (GSTM1).